The sequence spans 1619 residues: ATP-dependent helicase ULS1 (1619 aa).

Residues 7 to 10 carry the SUMO interacting motif; type a 1 motif; the sequence is IDLT. Residues 86–102 show a composition bias toward polar residues; the sequence is STFNNEKSSNEVKQQQV. Disordered stretches follow at residues 86–123, 200–279, 347–371, and 429–450; these read STFN…SSPS, NNKP…VESS, PILP…NSSI, and SGSN…SVLQ. Residues 103-118 are compositionally biased toward basic and acidic residues; that stretch reads LKEETMGSSNDEKKTQ. At S121 the chain carries Phosphoserine. Over residues 200–210 the composition is skewed to polar residues; the sequence is NNKPSQQQFSD. Residues 211-226 are compositionally biased toward basic and acidic residues; the sequence is PETKDNSLKSENKDQI. 2 stretches are compositionally biased toward polar residues: residues 242 to 259 and 269 to 279; these read SAFQ…TIPN and LPSNLSSVESS. The span at 353 to 366 shows a compositional bias: basic and acidic residues; it reads NMDHTTHNSHDSEQ. Positions 371–378 match the SUMO interacting motif; type b 1 motif; it reads IIILSDED. The SUMO interacting motif; type a 2 motif lies at 470–473; sequence LDTL. Positions 543–550 match the SUMO interacting motif; type b 2 motif; the sequence is ILVDEAEN. Residues 956 to 1157 form the Helicase ATP-binding domain; it reads QVENSAKKGG…YSLIRFLRIP (202 aa). 969-976 is a binding site for ATP; sequence DDMGLGKT. Residues 1330–1386 form an RING-type zinc finger; sequence CFWCMEQLEPEAMSVLTGCGHLICDTCIEPFIEESSMLPQAKKTKGGAFAIPCKDCQ. Residues 1447–1606 enclose the Helicase C-terminal domain; that stretch reads QCIQVIQRVF…GKIKEVNSLG (160 aa).

The protein belongs to the SNF2/RAD54 helicase family. In terms of assembly, interacts with CDC3, CDC11, EBP2, SIR4, UBC4 and SUMO/SMT3.

It is found in the nucleus. In terms of biological role, ATP-dependent helicase involved mating type switching and in silencing interference through its interaction with the silencing regulator SIR4. Cooperates with UBC4 and UBC5 to mediate ubiquitination of SUMO conjugates. This chain is ATP-dependent helicase ULS1 (ULS1), found in Saccharomyces cerevisiae (strain ATCC 204508 / S288c) (Baker's yeast).